The chain runs to 369 residues: Nuclear pore complex-interacting protein family member A7 (369 aa).

A disordered region spans residues 151 to 171; the sequence is SMKEREHREEERQVSEAEENG.

The protein belongs to the NPIP family.

In Homo sapiens (Human), this protein is Nuclear pore complex-interacting protein family member A7 (NPIPA7).